The primary structure comprises 157 residues: 17.8 kDa class I heat shock protein (157 aa).

Residues 43–157 (ETAAFVNTHI…PEVKAIDISG (115 aa)) form the sHSP domain.

This sequence belongs to the small heat shock protein (HSP20) family. In terms of assembly, forms oligomeric structures.

Its subcellular location is the cytoplasm. This is 17.8 kDa class I heat shock protein from Daucus carota (Wild carrot).